The sequence spans 296 residues: Formamidopyrimidine-DNA glycosylase (296 aa).

The active-site Schiff-base intermediate with DNA is the Pro2. Glu3 functions as the Proton donor in the catalytic mechanism. Lys58 serves as the catalytic Proton donor; for beta-elimination activity. Residues His104, Arg126, and Lys169 each coordinate DNA. The FPG-type zinc-finger motif lies at Ser260–Lys296. Arg286 serves as the catalytic Proton donor; for delta-elimination activity.

The protein belongs to the FPG family. Monomer. Requires Zn(2+) as cofactor.

It catalyses the reaction Hydrolysis of DNA containing ring-opened 7-methylguanine residues, releasing 2,6-diamino-4-hydroxy-5-(N-methyl)formamidopyrimidine.. It carries out the reaction 2'-deoxyribonucleotide-(2'-deoxyribose 5'-phosphate)-2'-deoxyribonucleotide-DNA = a 3'-end 2'-deoxyribonucleotide-(2,3-dehydro-2,3-deoxyribose 5'-phosphate)-DNA + a 5'-end 5'-phospho-2'-deoxyribonucleoside-DNA + H(+). Involved in base excision repair of DNA damaged by oxidation or by mutagenic agents. Acts as a DNA glycosylase that recognizes and removes damaged bases. Has a preference for oxidized purines, such as 7,8-dihydro-8-oxoguanine (8-oxoG). Has AP (apurinic/apyrimidinic) lyase activity and introduces nicks in the DNA strand. Cleaves the DNA backbone by beta-delta elimination to generate a single-strand break at the site of the removed base with both 3'- and 5'-phosphates. In Rhizobium etli (strain ATCC 51251 / DSM 11541 / JCM 21823 / NBRC 15573 / CFN 42), this protein is Formamidopyrimidine-DNA glycosylase.